Here is a 327-residue protein sequence, read N- to C-terminus: Phenylalanine--tRNA ligase alpha subunit (327 aa).

Glu-252 contacts Mg(2+).

This sequence belongs to the class-II aminoacyl-tRNA synthetase family. Phe-tRNA synthetase alpha subunit type 1 subfamily. As to quaternary structure, tetramer of two alpha and two beta subunits. Requires Mg(2+) as cofactor.

It localises to the cytoplasm. It carries out the reaction tRNA(Phe) + L-phenylalanine + ATP = L-phenylalanyl-tRNA(Phe) + AMP + diphosphate + H(+). This Glaesserella parasuis serovar 5 (strain SH0165) (Haemophilus parasuis) protein is Phenylalanine--tRNA ligase alpha subunit.